The following is a 148-amino-acid chain: Small ribosomal subunit protein eS12B (148 aa).

It belongs to the eukaryotic ribosomal protein eS12 family. Component of the small ribosomal subunit (SSU). Mature yeast ribosomes consist of a small (40S) and a large (60S) subunit. The 40S small subunit contains 1 molecule of ribosomal RNA (18S rRNA) and at least 33 different proteins. The large 60S subunit contains 3 rRNA molecules (25S, 5.8S and 5S rRNA) and at least 46 different proteins.

The protein localises to the cytoplasm. Component of the ribosome, a large ribonucleoprotein complex responsible for the synthesis of proteins in the cell. The small ribosomal subunit (SSU) binds messenger RNAs (mRNAs) and translates the encoded message by selecting cognate aminoacyl-transfer RNA (tRNA) molecules. The large subunit (LSU) contains the ribosomal catalytic site termed the peptidyl transferase center (PTC), which catalyzes the formation of peptide bonds, thereby polymerizing the amino acids delivered by tRNAs into a polypeptide chain. The nascent polypeptides leave the ribosome through a tunnel in the LSU and interact with protein factors that function in enzymatic processing, targeting, and the membrane insertion of nascent chains at the exit of the ribosomal tunnel. The polypeptide is Small ribosomal subunit protein eS12B (rps1202) (Schizosaccharomyces pombe (strain 972 / ATCC 24843) (Fission yeast)).